The chain runs to 347 residues: 4-hydroxy-2-oxovalerate aldolase (347 aa).

The Pyruvate carboxyltransferase domain maps to 2-252 (ILISDATLRD…DTRTTFERVM (251 aa)). Residue 10–11 (RD) participates in substrate binding. Asp11 is a Mn(2+) binding site. His14 acts as the Proton acceptor in catalysis. Residues Ser164 and His191 each coordinate substrate. Mn(2+) is bound by residues His191 and His193.

This sequence belongs to the 4-hydroxy-2-oxovalerate aldolase family.

It carries out the reaction (S)-4-hydroxy-2-oxopentanoate = acetaldehyde + pyruvate. The sequence is that of 4-hydroxy-2-oxovalerate aldolase from Burkholderia pseudomallei (strain 1106a).